A 120-amino-acid polypeptide reads, in one-letter code: Large ribosomal subunit protein bL12 (120 aa).

Belongs to the bacterial ribosomal protein bL12 family. Homodimer. Part of the ribosomal stalk of the 50S ribosomal subunit. Forms a multimeric L10(L12)X complex, where L10 forms an elongated spine to which 2 to 4 L12 dimers bind in a sequential fashion. Binds GTP-bound translation factors.

Its function is as follows. Forms part of the ribosomal stalk which helps the ribosome interact with GTP-bound translation factors. Is thus essential for accurate translation. The chain is Large ribosomal subunit protein bL12 from Lactobacillus acidophilus (strain ATCC 700396 / NCK56 / N2 / NCFM).